Consider the following 116-residue polypeptide: Large ribosomal subunit protein uL18 (116 aa).

It belongs to the universal ribosomal protein uL18 family. As to quaternary structure, part of the 50S ribosomal subunit; part of the 5S rRNA/L5/L18/L25 subcomplex. Contacts the 5S and 23S rRNAs.

This is one of the proteins that bind and probably mediate the attachment of the 5S RNA into the large ribosomal subunit, where it forms part of the central protuberance. The polypeptide is Large ribosomal subunit protein uL18 (Cellvibrio japonicus (strain Ueda107) (Pseudomonas fluorescens subsp. cellulosa)).